We begin with the raw amino-acid sequence, 279 residues long: Diaminopimelate epimerase (279 aa).

Asn-14 and Gln-68 together coordinate substrate. Catalysis depends on Cys-77, which acts as the Proton donor. Substrate is bound by residues 78 to 79 (GN), Asn-191, and 207 to 208 (ER). Cys-217 serves as the catalytic Proton acceptor. Residue 218 to 219 (GT) participates in substrate binding.

Belongs to the diaminopimelate epimerase family. Homodimer.

It localises to the cytoplasm. It carries out the reaction (2S,6S)-2,6-diaminopimelate = meso-2,6-diaminopimelate. It functions in the pathway amino-acid biosynthesis; L-lysine biosynthesis via DAP pathway; DL-2,6-diaminopimelate from LL-2,6-diaminopimelate: step 1/1. Functionally, catalyzes the stereoinversion of LL-2,6-diaminopimelate (L,L-DAP) to meso-diaminopimelate (meso-DAP), a precursor of L-lysine. This Methanothrix thermoacetophila (strain DSM 6194 / JCM 14653 / NBRC 101360 / PT) (Methanosaeta thermophila) protein is Diaminopimelate epimerase.